Reading from the N-terminus, the 143-residue chain is Nucleoside diphosphate kinase (143 aa).

The ATP site is built by K11, F59, R87, T93, R104, and N114. Residue H117 is the Pros-phosphohistidine intermediate of the active site.

This sequence belongs to the NDK family. In terms of assembly, homotetramer. It depends on Mg(2+) as a cofactor.

The protein localises to the cytoplasm. The enzyme catalyses a 2'-deoxyribonucleoside 5'-diphosphate + ATP = a 2'-deoxyribonucleoside 5'-triphosphate + ADP. It carries out the reaction a ribonucleoside 5'-diphosphate + ATP = a ribonucleoside 5'-triphosphate + ADP. Its function is as follows. Major role in the synthesis of nucleoside triphosphates other than ATP. The ATP gamma phosphate is transferred to the NDP beta phosphate via a ping-pong mechanism, using a phosphorylated active-site intermediate. The chain is Nucleoside diphosphate kinase from Edwardsiella ictaluri (strain 93-146).